The primary structure comprises 171 residues: RNA pyrophosphohydrolase (171 aa).

Residues 6–149 (GFRPNVGIIL…KREVYRRALK (144 aa)) enclose the Nudix hydrolase domain. A Nudix box motif is present at residues 39–60 (GGIKESESAEQALYRELQEEVG).

The protein belongs to the Nudix hydrolase family. RppH subfamily. Requires a divalent metal cation as cofactor.

Accelerates the degradation of transcripts by removing pyrophosphate from the 5'-end of triphosphorylated RNA, leading to a more labile monophosphorylated state that can stimulate subsequent ribonuclease cleavage. The protein is RNA pyrophosphohydrolase of Teredinibacter turnerae (strain ATCC 39867 / T7901).